Reading from the N-terminus, the 118-residue chain is Large ribosomal subunit protein uL22 (118 aa).

This sequence belongs to the universal ribosomal protein uL22 family. As to quaternary structure, part of the 50S ribosomal subunit.

In terms of biological role, this protein binds specifically to 23S rRNA; its binding is stimulated by other ribosomal proteins, e.g. L4, L17, and L20. It is important during the early stages of 50S assembly. It makes multiple contacts with different domains of the 23S rRNA in the assembled 50S subunit and ribosome. The globular domain of the protein is located near the polypeptide exit tunnel on the outside of the subunit, while an extended beta-hairpin is found that lines the wall of the exit tunnel in the center of the 70S ribosome. This Levilactobacillus brevis (strain ATCC 367 / BCRC 12310 / CIP 105137 / JCM 1170 / LMG 11437 / NCIMB 947 / NCTC 947) (Lactobacillus brevis) protein is Large ribosomal subunit protein uL22.